A 543-amino-acid chain; its full sequence is Probable protein kinase UbiB (543 aa).

One can recognise a Protein kinase domain in the interval 123–501; that stretch reads DFDIVPLASA…KRQQAKGQFL (379 aa). ATP is bound by residues 129–137 and lysine 152; that span reads LASASIAQV. Catalysis depends on aspartate 287, which acts as the Proton acceptor. Residues 517–539 form a helical membrane-spanning segment; it reads TSNITALASISAATGVTFWLLSW.

It belongs to the ABC1 family. UbiB subfamily.

Its subcellular location is the cell inner membrane. The protein operates within cofactor biosynthesis; ubiquinone biosynthesis [regulation]. In terms of biological role, is probably a protein kinase regulator of UbiI activity which is involved in aerobic coenzyme Q (ubiquinone) biosynthesis. This is Probable protein kinase UbiB from Aliivibrio salmonicida (strain LFI1238) (Vibrio salmonicida (strain LFI1238)).